A 196-amino-acid polypeptide reads, in one-letter code: Putative archaetidylserine decarboxylase proenzyme (196 aa).

The active-site Schiff-base intermediate with substrate; via pyruvic acid is the Ser-164. Ser-164 is modified (pyruvic acid (Ser); by autocatalysis).

It belongs to the phosphatidylserine decarboxylase family. PSD-A subfamily. Heterodimer of a large membrane-associated beta subunit and a small pyruvoyl-containing alpha subunit. Pyruvate is required as a cofactor. Is synthesized initially as an inactive proenzyme. Formation of the active enzyme involves a self-maturation process in which the active site pyruvoyl group is generated from an internal serine residue via an autocatalytic post-translational modification. Two non-identical subunits are generated from the proenzyme in this reaction, and the pyruvate is formed at the N-terminus of the alpha chain, which is derived from the carboxyl end of the proenzyme. The post-translation cleavage follows an unusual pathway, termed non-hydrolytic serinolysis, in which the side chain hydroxyl group of the serine supplies its oxygen atom to form the C-terminus of the beta chain, while the remainder of the serine residue undergoes an oxidative deamination to produce ammonia and the pyruvoyl prosthetic group on the alpha chain.

It localises to the cell membrane. It catalyses the reaction archaetidylserine + H(+) = archaetidylethanolamine + CO2. Functionally, catalyzes the formation of archaetidylethanolamine (PtdEtn) from archaetidylserine (PtdSer). In Halobacterium salinarum (strain ATCC 700922 / JCM 11081 / NRC-1) (Halobacterium halobium), this protein is Putative archaetidylserine decarboxylase proenzyme.